Consider the following 815-residue polypeptide: Echinoderm microtubule-associated protein-like 1 (815 aa).

Residues 31-72 (SMEVTDRIASLEQRVQMQEDDIQLLKSALADVVRRLNITEEQ) adopt a coiled-coil conformation. The tract at residues 77–179 (NRKGPTKARP…NSESKPKEPV (103 aa)) is disordered. A compositionally biased stretch (polar residues) spans 92–101 (PLRTTVNNGT). The residue at position 113 (S113) is a Phosphoserine. Polar residues predominate over residues 126–138 (TKSNIKRTSSSER). Residues 143 to 153 (GRRESNGDSRG) are compositionally biased toward basic and acidic residues. A compositionally biased stretch (low complexity) spans 156 to 168 (NRTGSTSSSSSGK). Residues 176–815 (KEPVFSAEEG…DTSIMQWRVI (640 aa)) form a tandem atypical propeller in EMLs region. WD repeat units lie at residues 261-310 (EQLQ…IWDS), 315-358 (TLHV…VWDW), 363-400 (KLAD…FWTL), 409-446 (QGLF…VWGK), 450-489 (RISY…SWSG), 493-530 (KLRK…LQGT), 535-572 (FTPI…LWDA), 578-613 (VWDK…VFDT), 617-655 (DLVT…IYGV), 664-701 (RVGK…YWVP), 709-768 (SVET…LFSY), and 775-814 (APSH…QWRV).

Belongs to the WD repeat EMAP family. In terms of assembly, homotrimer; self-association is mediated by the N-terminal coiled coil. Does not interact with EML3. Binds repolymerizing microtubules. Binds unpolymerized tubulins via its WD repeat region. Interacts with TASOR. In terms of tissue distribution, ubiquitous; expressed in most tissues with the exception of thymus and peripheral blood lymphocytes.

It is found in the cytoplasm. The protein resides in the perinuclear region. The protein localises to the cytoskeleton. Its function is as follows. Modulates the assembly and organization of the microtubule cytoskeleton, and probably plays a role in regulating the orientation of the mitotic spindle and the orientation of the plane of cell division. Required for normal proliferation of neuronal progenitor cells in the developing brain and for normal brain development. Does not affect neuron migration per se. In Homo sapiens (Human), this protein is Echinoderm microtubule-associated protein-like 1 (EML1).